The sequence spans 417 residues: Lissencephaly-1 homolog (417 aa).

The region spanning 7 to 39 (QKEELNRAIADYLFANGYVKALNAFREESQLAG) is the LisH domain. The stretch at 54–86 (TSVIRLQKKVMDLEAKLNEAEKEFQSMQNAIGF) forms a coiled coil. WD repeat units follow at residues 120 to 159 (GHRS…FEHT), 162 to 203 (GHTD…KTLT), 204 to 243 (GHDH…CTKT), 246 to 285 (GHTE…CQVV), 288 to 340 (GHEH…CLFV), 343 to 382 (GHDN…CHKT), and 385 to 417 (AHSH…WDCR).

The protein belongs to the WD repeat LIS1/nudF family.

Its subcellular location is the cytoplasm. It localises to the cytoskeleton. It is found in the microtubule organizing center. The protein resides in the centrosome. Positively regulates the activity of the minus-end directed microtubule motor protein dynein. May enhance dynein-mediated microtubule sliding by targeting dynein to the microtubule plus end. Required for several dynein- and microtubule-dependent processes. This Schistosoma mansoni (Blood fluke) protein is Lissencephaly-1 homolog.